We begin with the raw amino-acid sequence, 228 residues long: Lipoprotein-releasing system ATP-binding protein LolD (228 aa).

An ABC transporter domain is found at Leu-6 to Val-225. Gly-42–Ser-49 provides a ligand contact to ATP.

This sequence belongs to the ABC transporter superfamily. Lipoprotein translocase (TC 3.A.1.125) family. As to quaternary structure, the complex is composed of two ATP-binding proteins (LolD) and two transmembrane proteins (LolC and LolE).

It localises to the cell inner membrane. Part of the ABC transporter complex LolCDE involved in the translocation of mature outer membrane-directed lipoproteins, from the inner membrane to the periplasmic chaperone, LolA. Responsible for the formation of the LolA-lipoprotein complex in an ATP-dependent manner. The polypeptide is Lipoprotein-releasing system ATP-binding protein LolD (Acinetobacter baylyi (strain ATCC 33305 / BD413 / ADP1)).